A 65-amino-acid polypeptide reads, in one-letter code: Large ribosomal subunit protein bL33 (65 aa).

The interval 20–40 is disordered; that stretch reads VPPSEKRSPGVSRYTTEKNRR.

It belongs to the bacterial ribosomal protein bL33 family.

In Prochlorococcus marinus (strain MIT 9211), this protein is Large ribosomal subunit protein bL33.